Reading from the N-terminus, the 215-residue chain is Cytochrome b6 (215 aa).

Residues 32 to 52 (IFYCLGGITFTSFVIQVASGF) traverse the membrane as a helical segment. Heme c is bound at residue Cys35. Heme b contacts are provided by His86 and His100. 3 helical membrane-spanning segments follow: residues 90 to 110 (ASMM…TGGF), 116 to 136 (LTWV…VTGY), and 186 to 206 (LHTF…FLMI). Heme b-binding residues include His187 and His202.

It belongs to the cytochrome b family. PetB subfamily. As to quaternary structure, the 4 large subunits of the cytochrome b6-f complex are cytochrome b6, subunit IV (17 kDa polypeptide, PetD), cytochrome f and the Rieske protein, while the 4 small subunits are PetG, PetL, PetM and PetN. The complex functions as a dimer. It depends on heme b as a cofactor. Heme c serves as cofactor.

It is found in the plastid. Its subcellular location is the chloroplast thylakoid membrane. Component of the cytochrome b6-f complex, which mediates electron transfer between photosystem II (PSII) and photosystem I (PSI), cyclic electron flow around PSI, and state transitions. In Chaetosphaeridium globosum (Charophycean green alga), this protein is Cytochrome b6.